A 346-amino-acid chain; its full sequence is NADH-ubiquinone oxidoreductase chain 2 (346 aa).

Helical transmembrane passes span 1 to 21, 26 to 46, 60 to 80, 96 to 116, 122 to 142, 151 to 171, 178 to 198, 199 to 219, 242 to 262, 274 to 294, and 320 to 340; these read MSPYISPLFSITMIMSVMLIS, WVFMWLGLELGTLAFIPILVW, FIVQAMAAAVFFLGGMVSLSG, MMIMLAVVTKLGLAPFHYWVV, LNYIPGAVLLTWQKVPGLAVL, SSMLLLFGMVSALVGGLGGLG, LLAFSSISHLGWLVVGCVAGS, LLGLSYFTLYVVLSIPLFSIL, VLLGVGFLSLGGLPPFFGFFG, LLLGVSVVLITGTLISLFYYL, and LSGLMSGLLVLNMLGLFLVGG.

It belongs to the complex I subunit 2 family.

It localises to the mitochondrion inner membrane. It carries out the reaction a ubiquinone + NADH + 5 H(+)(in) = a ubiquinol + NAD(+) + 4 H(+)(out). Its function is as follows. Core subunit of the mitochondrial membrane respiratory chain NADH dehydrogenase (Complex I) that is believed to belong to the minimal assembly required for catalysis. Complex I functions in the transfer of electrons from NADH to the respiratory chain. The immediate electron acceptor for the enzyme is believed to be ubiquinone. The chain is NADH-ubiquinone oxidoreductase chain 2 (ND2) from Branchiostoma floridae (Florida lancelet).